Consider the following 1418-residue polypeptide: Sterol 3-beta-glucosyltransferase (1418 aa).

The span at 1–16 shows a compositional bias: basic and acidic residues; that stretch reads MRPFLDDAKRRVDRKL. 3 disordered regions span residues 1–59, 83–188, and 207–233; these read MRPF…SREG, ARFD…RSAT, and LKASSTERSQPSLDESGEKGPRGASVS. A compositionally biased stretch (polar residues) spans 18–28; that stretch reads ASRQSLSTSRL. Composition is skewed to basic and acidic residues over residues 35 to 44 and 95 to 105; these read DRLKDNHDAQ and SEQRPRKESSV. A compositionally biased stretch (polar residues) spans 106–115; sequence RKGTSASANT. A compositionally biased stretch (low complexity) spans 116 to 126; sequence SSPLDSSQRSS. Basic and acidic residues-rich tracts occupy residues 127–139 and 147–166; these read SRTDGKSEKESGT and TISDHKLFRPFESNSKHEPQ. Residues 209 to 219 are compositionally biased toward polar residues; the sequence is ASSTERSQPSL. The region spanning 249-288 is the GRAM 1 domain; the sequence is EKVLVEYACSLLQSILLQGYMYVTEGHICFYAYLPKKSTV. The 99-residue stretch at 289–387 folds into the PH domain; the sequence is AIKSGYLYKR…WVKALQKVIF (99 aa). A disordered region spans residues 462–651; it reads ISSQHLSPQP…DPTKSFSGAP (190 aa). A compositionally biased stretch (polar residues) spans 486–497; that stretch reads RWSLTSGTSRVL. Residues 508–519 are compositionally biased toward low complexity; the sequence is ASASTSHTSLAH. The segment covering 534–575 has biased composition (polar residues); it reads SESILNSFEQGTESSAAWQSMTDAAESASQILNRSDVFQSPT. Over residues 578-598 the composition is skewed to basic and acidic residues; it reads GLDRRPSGGERRGRRNSDETA. A compositionally biased stretch (polar residues) spans 599–612; it reads RSLSTRANVGTGQQ. A compositionally biased stretch (basic and acidic residues) spans 615–633; that stretch reads ELGRRMDGDTSGREARDST. Over residues 635–651 the composition is skewed to polar residues; it reads ESDQYTQDPTKSFSGAP. The 67-residue stretch at 733-799 folds into the GRAM 2 domain; that stretch reads DRFRAHFALP…RDIENVEKEK (67 aa). Positions 920, 921, 923, 1223, 1225, 1238, 1242, 1243, 1262, and 1263 each coordinate UDP-alpha-D-glucose. Residues 1339-1418 are disordered; sequence SIASSTPFSP…SGPGRKLSGR (80 aa). Positions 1341-1355 are enriched in low complexity; it reads ASSTPFSPTPSAKTT. Acidic residues predominate over residues 1358 to 1379; the sequence is QDADDDVEDSEEWTFVGDDTDM. The span at 1380–1391 shows a compositional bias: basic and acidic residues; sequence EMSRRLRDRAIS.

This sequence belongs to the glycosyltransferase 28 family.

It is found in the cytoplasm. The protein resides in the preautophagosomal structure membrane. The catalysed reaction is a sterol + UDP-alpha-D-glucose = a sterol 3-beta-D-glucoside + UDP + H(+). It catalyses the reaction ergosterol + UDP-alpha-D-glucose = ergosteryl 3-beta-D-glucoside + UDP + H(+). Sterol glycosyltransferase responsible for the glycosylation of ergosterol to form ergosterol-glucoside. This Neosartorya fischeri (strain ATCC 1020 / DSM 3700 / CBS 544.65 / FGSC A1164 / JCM 1740 / NRRL 181 / WB 181) (Aspergillus fischerianus) protein is Sterol 3-beta-glucosyltransferase.